A 23-amino-acid polypeptide reads, in one-letter code: Chaperonin GroEL (23 aa).

The protein belongs to the chaperonin (HSP60) family. As to quaternary structure, forms a cylinder of 14 subunits composed of two heptameric rings stacked back-to-back. Interacts with the co-chaperonin GroES. Post-translationally, phosphorylated on threonine.

The protein localises to the cytoplasm. It catalyses the reaction ATP + H2O + a folded polypeptide = ADP + phosphate + an unfolded polypeptide.. In terms of biological role, together with its co-chaperonin GroES, plays an essential role in assisting protein folding. The GroEL-GroES system forms a nano-cage that allows encapsulation of the non-native substrate proteins and provides a physical environment optimized to promote and accelerate protein folding. This is Chaperonin GroEL from Acidithiobacillus ferrooxidans (Thiobacillus ferrooxidans).